The following is a 318-amino-acid chain: Pantothenate kinase (318 aa).

96–103 (GSVSVGKS) provides a ligand contact to ATP.

Belongs to the prokaryotic pantothenate kinase family.

The protein localises to the cytoplasm. The enzyme catalyses (R)-pantothenate + ATP = (R)-4'-phosphopantothenate + ADP + H(+). Its pathway is cofactor biosynthesis; coenzyme A biosynthesis; CoA from (R)-pantothenate: step 1/5. This chain is Pantothenate kinase, found in Bradyrhizobium sp. (strain BTAi1 / ATCC BAA-1182).